We begin with the raw amino-acid sequence, 279 residues long: Tryptophan synthase alpha chain (279 aa).

Residues Glu50 and Asp61 each act as proton acceptor in the active site.

The protein belongs to the TrpA family. Tetramer of two alpha and two beta chains.

It carries out the reaction (1S,2R)-1-C-(indol-3-yl)glycerol 3-phosphate + L-serine = D-glyceraldehyde 3-phosphate + L-tryptophan + H2O. It functions in the pathway amino-acid biosynthesis; L-tryptophan biosynthesis; L-tryptophan from chorismate: step 5/5. In terms of biological role, the alpha subunit is responsible for the aldol cleavage of indoleglycerol phosphate to indole and glyceraldehyde 3-phosphate. The chain is Tryptophan synthase alpha chain from Rhizobium johnstonii (strain DSM 114642 / LMG 32736 / 3841) (Rhizobium leguminosarum bv. viciae).